The following is a 91-amino-acid chain: Mercuric transport protein periplasmic component (91 aa).

Residues 1–19 (MKKLFASLAIAAVVAPVWA) form the signal peptide. The HMA domain occupies 22 to 88 (QTVTLSVPGM…ATEDAGYPSS (67 aa)). The Hg(2+) site is built by cysteine 33 and cysteine 36.

Belongs to the MerP family. In terms of assembly, monomer.

It is found in the periplasm. Its function is as follows. Involved in mercury resistance. Acts as a mercury scavenger that specifically binds to a mercuric ion in the periplasm and probably passes it to the cytoplasmic mercuric reductase MerA via the mercuric transport protein MerT. The sequence is that of Mercuric transport protein periplasmic component from Serratia marcescens.